The sequence spans 103 residues: MQKIRKGDSVVVLSGKDKGRKGEVLKVMPKDEQALVSGINIVKRHQRQTQTQEAGIISKEAPIHLSNLAIADPKDGKPTRIGFRVEDGKKVRVAKRSGALIDG.

This sequence belongs to the universal ribosomal protein uL24 family. Part of the 50S ribosomal subunit.

Functionally, one of two assembly initiator proteins, it binds directly to the 5'-end of the 23S rRNA, where it nucleates assembly of the 50S subunit. Its function is as follows. One of the proteins that surrounds the polypeptide exit tunnel on the outside of the subunit. In Brucella ovis (strain ATCC 25840 / 63/290 / NCTC 10512), this protein is Large ribosomal subunit protein uL24.